The primary structure comprises 192 residues: MPSAPRKQSKTYKVPRRPFESARLDAELKLAGEYGLRNKHEIWRVALTLSKIRRAARELLTLDEKDPKRLFEGNAIIRRLVRLGILDESRMKLDYVLALRIEDFLERRLQTQVFKLGLAKSIHHARVLIFQRHIRVGKQIVNVPSFVVRLDAQKHIDFALSSPYGGGRPGRCKRKRLRSQQEGGEGEEAEEE.

Phosphoserine occurs at positions 89 and 179. The S4 RNA-binding domain maps to 107-181; the sequence is RRLQTQVFKL…CKRKRLRSQQ (75 aa). A disordered region spans residues 166 to 192; the sequence is GGRPGRCKRKRLRSQQEGGEGEEAEEE.

The protein belongs to the universal ribosomal protein uS4 family. As to quaternary structure, component of the small ribosomal subunit (SSU). Mature yeast ribosomes consist of a small (40S) and a large (60S) subunit. The 40S small subunit contains 1 molecule of ribosomal RNA (18S rRNA) and at least 33 different proteins. The large 60S subunit contains 3 rRNA molecules (25S, 5.8S and 5S rRNA) and at least 46 different proteins. Interacts with snoRNA U3. uS11 interacts with MPP10. Component of the ribosomal small subunit (SSU) processome composed of at least 40 protein subunits and snoRNA U3.

The protein localises to the cytoplasm. In terms of biological role, component of the ribosome, a large ribonucleoprotein complex responsible for the synthesis of proteins in the cell. The small ribosomal subunit (SSU) binds messenger RNAs (mRNAs) and translates the encoded message by selecting cognate aminoacyl-transfer RNA (tRNA) molecules. The large subunit (LSU) contains the ribosomal catalytic site termed the peptidyl transferase center (PTC), which catalyzes the formation of peptide bonds, thereby polymerizing the amino acids delivered by tRNAs into a polypeptide chain. The nascent polypeptides leave the ribosome through a tunnel in the LSU and interact with protein factors that function in enzymatic processing, targeting, and the membrane insertion of nascent chains at the exit of the ribosomal tunnel. uS4 is involved in nucleolar processing of pre-18S ribosomal RNA and ribosome assembly. The sequence is that of Small ribosomal subunit protein uS4B (rps902) from Schizosaccharomyces pombe (strain 972 / ATCC 24843) (Fission yeast).